Reading from the N-terminus, the 87-residue chain is MNSKVFAVLLLLALSTCVLSEKYCPTPRNTSCKKMNIRNNCCRDSDCTSNAFCCAEPCGNFCHKASDKPGGRRVDPNASCQTGYVYW.

Positions 1 to 20 (MNSKVFAVLLLLALSTCVLS) are cleaved as a signal peptide. The region spanning 21–66 (EKYCPTPRNTSCKKMNIRNNCCRDSDCTSNAFCCAEPCGNFCHKAS) is the WAP domain. Intrachain disulfides connect Cys24/Cys54, Cys32/Cys58, Cys41/Cys53, Cys42/Cys80, and Cys47/Cys62.

Belongs to the venom protein 11 family. 01 (wap-1) subfamily. In terms of processing, contains 5 disulfide bonds. In terms of tissue distribution, expressed by the venom gland.

Its subcellular location is the secreted. Has antibacterial activity. This chain is U14-lycotoxin-Ls1a, found in Lycosa singoriensis (Wolf spider).